The chain runs to 412 residues: Subtilisin-like protease 6 (412 aa).

The first 20 residues, 1-20, serve as a signal peptide directing secretion; the sequence is MGFITKAIPIVLAALSTVNG. Positions 21-127 are excised as a propeptide; the sequence is AKILEAGPHA…VRTSTNGTNL (107 aa). Positions 36-120 constitute an Inhibitor I9 domain; the sequence is KYIVVMKREV…YIEPDFVVRT (85 aa). 2 N-linked (GlcNAc...) asparagine glycosylation sites follow: Asn-123 and Asn-126. Positions 135-412 constitute a Peptidase S8 domain; it reads SWGLARVSSK…SKLIYNGSGK (278 aa). Active-site charge relay system residues include Asp-167 and His-198. N-linked (GlcNAc...) asparagine glycosylation is found at Asn-252 and Asn-264. Residue Ser-358 is the Charge relay system of the active site. An N-linked (GlcNAc...) asparagine glycan is attached at Asn-408.

Belongs to the peptidase S8 family.

It localises to the secreted. Its function is as follows. Secreted subtilisin-like serine protease with keratinolytic activity that contributes to pathogenicity. This chain is Subtilisin-like protease 6 (SUB6), found in Trichophyton tonsurans (Scalp ringworm fungus).